The primary structure comprises 153 residues: Ribonuclease H (153 aa).

Residues 1–142 form the RNase H type-1 domain; that stretch reads MLKTIKIFSD…CDHLARESAK (142 aa). The Mg(2+) site is built by Asp-10, Glu-48, Asp-70, and Asp-134.

The protein belongs to the RNase H family. In terms of assembly, monomer. The cofactor is Mg(2+).

Its subcellular location is the cytoplasm. The catalysed reaction is Endonucleolytic cleavage to 5'-phosphomonoester.. Endonuclease that specifically degrades the RNA of RNA-DNA hybrids. The protein is Ribonuclease H of Buchnera aphidicola subsp. Baizongia pistaciae (strain Bp).